Reading from the N-terminus, the 156-residue chain is ATP synthase subunit b (156 aa).

The helical transmembrane segment at 12 to 32 (VAFFIFVLFCMKYVWPPVIAA) threads the bilayer.

It belongs to the ATPase B chain family. In terms of assembly, F-type ATPases have 2 components, F(1) - the catalytic core - and F(0) - the membrane proton channel. F(1) has five subunits: alpha(3), beta(3), gamma(1), delta(1), epsilon(1). F(0) has three main subunits: a(1), b(2) and c(10-14). The alpha and beta chains form an alternating ring which encloses part of the gamma chain. F(1) is attached to F(0) by a central stalk formed by the gamma and epsilon chains, while a peripheral stalk is formed by the delta and b chains.

It is found in the cell inner membrane. Its function is as follows. F(1)F(0) ATP synthase produces ATP from ADP in the presence of a proton or sodium gradient. F-type ATPases consist of two structural domains, F(1) containing the extramembraneous catalytic core and F(0) containing the membrane proton channel, linked together by a central stalk and a peripheral stalk. During catalysis, ATP synthesis in the catalytic domain of F(1) is coupled via a rotary mechanism of the central stalk subunits to proton translocation. In terms of biological role, component of the F(0) channel, it forms part of the peripheral stalk, linking F(1) to F(0). The sequence is that of ATP synthase subunit b from Pseudomonas syringae pv. tomato (strain ATCC BAA-871 / DC3000).